The primary structure comprises 148 residues: UPF0179 protein Ta1159 (148 aa).

Belongs to the UPF0179 family.

In Thermoplasma acidophilum (strain ATCC 25905 / DSM 1728 / JCM 9062 / NBRC 15155 / AMRC-C165), this protein is UPF0179 protein Ta1159.